Reading from the N-terminus, the 419-residue chain is MSQEPSIHTWPGSYYINSEKRWASGVLSLSRTTLRFASEQKQESLMSLKLSRIMEIKMESSSIIFSALTVLEQGNLKHWFGSLRPCRNAVYHVLEHFWRERLLSPSEPQGAEAPLSKGQELISLISGAQRRLEDTGKVLNHQGEQFDNMIQGLDKIESDLTVADKLLSELECPSWWPFSKMPWRSHQEAKSEAAAKAACTKGSGKIQKVIVSIPAIVFRDGNTGNMKPGSLTLLVSSLEVREANGQLLHCFEKEEVDDIHVFNPYEISIRQRFIGKPDICFRLLSARMTEALSVLEMQYKKKVEVTRDYAVFRSTSATTPESPESGGNVWAAGHGQDTEVPVEVPAGELTQLQLQVLQPTVTEAEAQELKQMLQQLKNLALEAETELERQDEALDVLSCSTDHATMNINRHTRRMRKLL.

T-SNARE coiled-coil homology domains lie at 108–170 (PQGA…LSEL) and 356–418 (VLQP…MRKL).

It belongs to the SVAP1 family.

Its function is as follows. May play a role in intracellular membrane fusion. This chain is Synaptosomal-associated protein 47 (snap47), found in Danio rerio (Zebrafish).